The sequence spans 330 residues: NmrA-like family domain-containing oxidoreductase notO (330 aa).

NADP(+) is bound by residues 12 to 17 (VGIGSL), 38 to 42 (HHFAQ), 59 to 60 (RS), 80 to 82 (IEA), and 160 to 163 (LGGG). The chain crosses the membrane as a helical span at residues 12–32 (VGIGSLPAGLVALFMGATSGI). Residues 158-202 (SVLGGGLESPLNEQDLDLRDPKNWTFWSSSMHSGTMGTLTLERIA) are interaction with ASS1. N-linked (GlcNAc...) asparagine glycans are attached at residues Asn-180 and Asn-207.

It belongs to the NmrA-type oxidoreductase family.

It localises to the membrane. Its function is as follows. NmrA-like family domain-containing oxidoreductase; part of the gene cluster that mediates the biosynthesis of notoamide, a fungal indole alkaloid that belongs to a family of natural products containing a characteristic bicyclo[2.2.2]diazaoctane core. The first step of notoamide biosynthesis involves coupling of L-proline and L-tryptophan by the bimodular NRPS notE, to produce cyclo-L-tryptophan-L-proline called brevianamide F. The reverse prenyltransferase notF then acts as a deoxybrevianamide E synthase and converts brevianamide F to deoxybrevianamide E via reverse prenylation at C-2 of the indole ring leading to the bicyclo[2.2.2]diazaoctane core. Deoxybrevianamide E is further hydroxylated at C-6 of the indole ring, likely catalyzed by the cytochrome P450 monooxygenase notG, to yield 6-hydroxy-deoxybrevianamide E. 6-hydroxy-deoxybrevianamide E is a specific substrate of the prenyltransferase notC for normal prenylation at C-7 to produce 6-hydroxy-7-prenyl-deoxybrevianamide, also called notoamide S. As the proposed pivotal branching point in notoamide biosynthesis, notoamide S can be diverted to notoamide E through an oxidative pyran ring closure putatively catalyzed by either notH cytochrome P450 monooxygenase or the notD FAD-linked oxidoreductase. This step would be followed by an indole 2,3-epoxidation-initiated pinacol-like rearrangement catalyzed by the notB FAD-dependent monooxygenase leading to the formation of notoamide C and notoamide D. On the other hand notoamide S is converted to notoamide T by notH (or notD), a bifunctional oxidase that also functions as the intramolecular Diels-Alderase responsible for generation of (+)-notoamide T. To generate antipodal (-)-notoaminide T, notH' (or notD') in Aspergillus versicolor is expected to catalyze a Diels-Alder reaction leading to the opposite stereochemistry. The remaining oxidoreductase notD (or notH) likely catalyzes the oxidative pyran ring formation to yield (+)-stephacidin A. The FAD-dependent monooxygenase notI is highly similar to notB and is predicted to catalyze a similar conversion from (+)-stephacidin A to (-)-notoamide B via the 2,3-epoxidation of (+)-stephacidin A followed by a pinacol-type rearrangement. Finally, it remains unclear which enzyme could be responsible for the final hydroxylation steps leading to notoamide A and sclerotiamide. The function of notO in the notoamide biosynthesis has not been determined yet. This Aspergillus sp. (strain MF297-2) protein is NmrA-like family domain-containing oxidoreductase notO.